The primary structure comprises 318 residues: Methionyl-tRNA formyltransferase (318 aa).

112 to 115 provides a ligand contact to (6S)-5,6,7,8-tetrahydrofolate; that stretch reads SILP.

This sequence belongs to the Fmt family.

It catalyses the reaction L-methionyl-tRNA(fMet) + (6R)-10-formyltetrahydrofolate = N-formyl-L-methionyl-tRNA(fMet) + (6S)-5,6,7,8-tetrahydrofolate + H(+). Its function is as follows. Attaches a formyl group to the free amino group of methionyl-tRNA(fMet). The formyl group appears to play a dual role in the initiator identity of N-formylmethionyl-tRNA by promoting its recognition by IF2 and preventing the misappropriation of this tRNA by the elongation apparatus. The polypeptide is Methionyl-tRNA formyltransferase (Shewanella sp. (strain MR-7)).